Here is a 655-residue protein sequence, read N- to C-terminus: NAD(P)H-quinone oxidoreductase subunit 5, chloroplastic (655 aa).

16 helical membrane-spanning segments follow: residues 7-27 (YAWL…LGLI), 40-60 (FAFF…SILI), 89-109 (IDPL…LVMI), 124-144 (FFAY…SPNL), 147-167 (IYVF…FWFT), 185-205 (GDFG…SFEF), 226-246 (HPVQ…GPMA), 265-285 (TPIS…FLVA), 296-316 (IVMG…AIIA), 334-354 (LGYM…FHLI), 361-381 (ALLF…VGFN), 402-422 (AITF…ACFW), 434-454 (AQPI…FYMF), 488-508 (ILIP…VGTP), 533-553 (LSMS…ASLI), and 635-655 (QSYV…SQGF).

It belongs to the complex I subunit 5 family. NDH is composed of at least 16 different subunits, 5 of which are encoded in the nucleus.

The protein resides in the plastid. It localises to the chloroplast thylakoid membrane. It carries out the reaction a plastoquinone + NADH + (n+1) H(+)(in) = a plastoquinol + NAD(+) + n H(+)(out). It catalyses the reaction a plastoquinone + NADPH + (n+1) H(+)(in) = a plastoquinol + NADP(+) + n H(+)(out). Functionally, NDH shuttles electrons from NAD(P)H:plastoquinone, via FMN and iron-sulfur (Fe-S) centers, to quinones in the photosynthetic chain and possibly in a chloroplast respiratory chain. The immediate electron acceptor for the enzyme in this species is believed to be plastoquinone. Couples the redox reaction to proton translocation, and thus conserves the redox energy in a proton gradient. The polypeptide is NAD(P)H-quinone oxidoreductase subunit 5, chloroplastic (ndhF) (Chlorokybus atmophyticus (Soil alga)).